Reading from the N-terminus, the 75-residue chain is SADEQKLRERFEALDKDKSGTLSVDELYEGVHAVHPKVSRNDIVKIIEKVDTNKDGQVSWQEFIEAFKRLADLKL.

Ser1 carries the N-acetylserine modification. EF-hand domains lie at 2 to 37 (ADEQ…VHPK) and 38 to 73 (VSRN…LADL). Ca(2+) is bound by residues Asp15, Asp17, Ser19, Thr21, Glu26, Asp51, Asn53, Asp55, Gln57, and Glu62.

As to quaternary structure, monomer and homodimer. In terms of tissue distribution, liver, and to a much lower level intestine.

Functionally, binds both calcium and copper, but not zinc. May be involved in calcium signal transduction. In Lepidosiren paradoxus (South American lungfish), this protein is Calhepatin.